Consider the following 109-residue polypeptide: Sperm-specific class P protein 16 (109 aa).

An MSP domain is found at Ser2–Ala109.

In terms of tissue distribution, expressed at higher level in testis.

The polypeptide is Sperm-specific class P protein 16 (ssp-16) (Caenorhabditis elegans).